Reading from the N-terminus, the 376-residue chain is 2-aminoethylphosphonate--pyruvate transaminase 2 (376 aa).

Position 194 is an N6-(pyridoxal phosphate)lysine (Lys-194).

The protein belongs to the class-V pyridoxal-phosphate-dependent aminotransferase family. PhnW subfamily. In terms of assembly, homodimer. Pyridoxal 5'-phosphate serves as cofactor.

It catalyses the reaction (2-aminoethyl)phosphonate + pyruvate = phosphonoacetaldehyde + L-alanine. In terms of biological role, involved in phosphonate degradation. The protein is 2-aminoethylphosphonate--pyruvate transaminase 2 of Burkholderia lata (strain ATCC 17760 / DSM 23089 / LMG 22485 / NCIMB 9086 / R18194 / 383).